The chain runs to 179 residues: Translation initiation factor IF-3 (179 aa).

Belongs to the IF-3 family. Monomer.

The protein resides in the cytoplasm. IF-3 binds to the 30S ribosomal subunit and shifts the equilibrium between 70S ribosomes and their 50S and 30S subunits in favor of the free subunits, thus enhancing the availability of 30S subunits on which protein synthesis initiation begins. This is Translation initiation factor IF-3 from Leptospira borgpetersenii serovar Hardjo-bovis (strain L550).